The primary structure comprises 268 residues: Putative carbamate hydrolase RutD (268 aa).

In terms of domain architecture, AB hydrolase-1 spans 15–119 (PVMVMIAGLG…VIVNGWLSLS (105 aa)).

The protein belongs to the AB hydrolase superfamily. Hydrolase RutD family.

The catalysed reaction is carbamate + 2 H(+) = NH4(+) + CO2. In terms of biological role, involved in pyrimidine catabolism. May facilitate the hydrolysis of carbamate, a reaction that can also occur spontaneously. The chain is Putative carbamate hydrolase RutD from Cronobacter sakazakii (strain ATCC BAA-894) (Enterobacter sakazakii).